The sequence spans 264 residues: DNA-directed RNA polymerase subunit Rpo3 (264 aa).

The [3Fe-4S] cluster site is built by Cys203, Cys206, and Cys209.

This sequence belongs to the archaeal Rpo3/eukaryotic RPB3 RNA polymerase subunit family. In terms of assembly, part of the RNA polymerase complex. It depends on [3Fe-4S] cluster as a cofactor.

It localises to the cytoplasm. It catalyses the reaction RNA(n) + a ribonucleoside 5'-triphosphate = RNA(n+1) + diphosphate. In terms of biological role, DNA-dependent RNA polymerase (RNAP) catalyzes the transcription of DNA into RNA using the four ribonucleoside triphosphates as substrates. The chain is DNA-directed RNA polymerase subunit Rpo3 from Methanothermobacter thermautotrophicus (strain ATCC 29096 / DSM 1053 / JCM 10044 / NBRC 100330 / Delta H) (Methanobacterium thermoautotrophicum).